The primary structure comprises 164 residues: Interferon gamma (164 aa).

The signal sequence occupies residues 1-19; the sequence is MTCQTYNLFVLSVIMIYYG. 2 N-linked (GlcNAc...) asparagine glycosylation sites follow: asparagine 42 and asparagine 61.

This sequence belongs to the type II (or gamma) interferon family. Homodimer.

The protein resides in the secreted. In terms of biological role, produced by lymphocytes activated by specific antigens or mitogens. IFN-gamma, in addition to having antiviral activity, has important immunoregulatory functions. It is a potent activator of macrophages, it has antiproliferative effects on transformed cells and it can potentiate the antiviral and antitumor effects of the type I interferons. The protein is Interferon gamma (IFNG) of Gallus gallus (Chicken).